The sequence spans 201 residues: Protease (201 aa).

Active-site residues include histidine 55, aspartate 72, and cysteine 122.

Belongs to the peptidase C5 family. In terms of assembly, interacts with protease cofactor pVI-C; this interaction is necessary for protease activation.

It localises to the virion. The protein resides in the host nucleus. The enzyme catalyses Cleaves proteins of the adenovirus and its host cell at two consensus sites: -Yaa-Xaa-Gly-Gly-|-Xaa- and -Yaa-Xaa-Gly-Xaa-|-Gly- (in which Yaa is Met, Ile or Leu, and Xaa is any amino acid).. With respect to regulation, requires DNA and protease cofactor for maximal activation. Inside nascent virions, becomes partially activated by binding to the viral DNA, allowing it to cleave the cofactor that binds to the protease and fully activates it. Actin, like the viral protease cofactor, seems to act as a cofactor in the cleavage of cytokeratin 18 and of actin itself. Cleaves viral precursor proteins (pTP, pIIIa, pVI, pVII, pVIII, and pX) inside newly assembled particles giving rise to mature virions. Protease complexed to its cofactor slides along the viral DNA to specifically locate and cleave the viral precursors. Mature virions have a weakened organization compared to the unmature virions, thereby facilitating subsequent uncoating. Without maturation, the particle lacks infectivity and is unable to uncoat. Late in adenovirus infection, in the cytoplasm, may participate in the cytoskeleton destruction. Cleaves host cell cytoskeletal keratins K7 and K18. The polypeptide is Protease (Pantherophis guttatus (Corn snake)).